Consider the following 103-residue polypeptide: MLTNDSMNENLNELKRVFSSLTGKEYFKNLDVGLVDLFRYLRDEIKDEKVVIALDEFQYLMQLNRGVLSIFQKIWDGILADTKVFLIICGSSCVSKHGRFRDW.

This is an uncharacterized protein from Methanocaldococcus jannaschii (strain ATCC 43067 / DSM 2661 / JAL-1 / JCM 10045 / NBRC 100440) (Methanococcus jannaschii).